The following is a 592-amino-acid chain: A-type ATP synthase subunit A (592 aa).

Residue 233-240 (GPFGSGKT) coordinates ATP.

It belongs to the ATPase alpha/beta chains family. Has multiple subunits with at least A(3), B(3), C, D, E, F, H, I and proteolipid K(x).

It localises to the cell membrane. The enzyme catalyses ATP + H2O + 4 H(+)(in) = ADP + phosphate + 5 H(+)(out). In terms of biological role, component of the A-type ATP synthase that produces ATP from ADP in the presence of a proton gradient across the membrane. The A chain is the catalytic subunit. The sequence is that of A-type ATP synthase subunit A from Saccharolobus islandicus (strain M.16.27) (Sulfolobus islandicus).